The sequence spans 360 residues: Photosystem II protein D1 (360 aa).

3 helical membrane-spanning segments follow: residues 29–46 (YIGW…TATS), 118–133 (HFLT…EWEL), and 142–156 (WISV…AAAA). A chlorophyll a-binding site is contributed by His118. Tyr126 is a binding site for pheophytin a. 2 residues coordinate [CaMn4O5] cluster: Asp170 and Glu189. A helical transmembrane segment spans residues 197 to 218 (FHQLGVAGVFGGSLFSAMHGSL). His198 serves as a coordination point for chlorophyll a. A quinone is bound by residues His215 and 264–265 (SF). His215 provides a ligand contact to Fe cation. His272 provides a ligand contact to Fe cation. A helical membrane pass occupies residues 274–288 (FLGLWPVVGIWLTAL). His332, Glu333, Asp342, and Ala344 together coordinate [CaMn4O5] cluster. Positions 345 to 360 (SGESLPVALTAPAVNG) are excised as a propeptide.

The protein belongs to the reaction center PufL/M/PsbA/D family. PSII is composed of 1 copy each of membrane proteins PsbA, PsbB, PsbC, PsbD, PsbE, PsbF, PsbH, PsbI, PsbJ, PsbK, PsbL, PsbM, PsbT, PsbX, PsbY, PsbZ, Psb30/Ycf12, at least 3 peripheral proteins of the oxygen-evolving complex and a large number of cofactors. It forms dimeric complexes. The cofactor is The D1/D2 heterodimer binds P680, chlorophylls that are the primary electron donor of PSII, and subsequent electron acceptors. It shares a non-heme iron and each subunit binds pheophytin, quinone, additional chlorophylls, carotenoids and lipids. D1 provides most of the ligands for the Mn4-Ca-O5 cluster of the oxygen-evolving complex (OEC). There is also a Cl(-1) ion associated with D1 and D2, which is required for oxygen evolution. The PSII complex binds additional chlorophylls, carotenoids and specific lipids.. Post-translationally, tyr-161 forms a radical intermediate that is referred to as redox-active TyrZ, YZ or Y-Z. C-terminally processed by CTPA; processing is essential to allow assembly of the oxygen-evolving complex and thus photosynthetic growth.

The protein localises to the plastid. The protein resides in the chloroplast thylakoid membrane. The catalysed reaction is 2 a plastoquinone + 4 hnu + 2 H2O = 2 a plastoquinol + O2. Functionally, photosystem II (PSII) is a light-driven water:plastoquinone oxidoreductase that uses light energy to abstract electrons from H(2)O, generating O(2) and a proton gradient subsequently used for ATP formation. It consists of a core antenna complex that captures photons, and an electron transfer chain that converts photonic excitation into a charge separation. The D1/D2 (PsbA/PsbD) reaction center heterodimer binds P680, the primary electron donor of PSII as well as several subsequent electron acceptors. This Pyropia yezoensis (Susabi-nori) protein is Photosystem II protein D1.